Consider the following 360-residue polypeptide: Ribosomal RNA large subunit methyltransferase M (360 aa).

Residues Ser-187, 220 to 223 (CPGG), Asp-239, Asp-259, and Asp-276 contribute to the S-adenosyl-L-methionine site. Catalysis depends on Lys-305, which acts as the Proton acceptor.

The protein belongs to the class I-like SAM-binding methyltransferase superfamily. RNA methyltransferase RlmE family. RlmM subfamily. In terms of assembly, monomer.

It localises to the cytoplasm. The enzyme catalyses cytidine(2498) in 23S rRNA + S-adenosyl-L-methionine = 2'-O-methylcytidine(2498) in 23S rRNA + S-adenosyl-L-homocysteine + H(+). Functionally, catalyzes the 2'-O-methylation at nucleotide C2498 in 23S rRNA. The protein is Ribosomal RNA large subunit methyltransferase M of Shewanella halifaxensis (strain HAW-EB4).